Here is a 252-residue protein sequence, read N- to C-terminus: MAYQSELGGDSSPLRKSGRGKIEIKRIENTTNRQVTFCKRRNGLLKKAYELSVLCDAEVALIVFSSRGRLYEYSNNSVKGTIERYKKAISDNSNTGSVAEINAQYYQQESAKLRQQIISIQNSNRQLMGETIGSMSPKELRNLEGRLERSITRIRSKKNELLFSEIDYMQKREVDLHNDNQILRAKIAENERNNPSISLMPGGSNYEQLMPPPQTQSQPFDSRNYFQVAALQPNNHHYSSAGRQDQTALQLV.

The disordered stretch occupies residues 1-20 (MAYQSELGGDSSPLRKSGRG). The region spanning 19–73 (RGKIEIKRIENTTNRQVTFCKRRNGLLKKAYELSVLCDAEVALIVFSSRGRLYEY) is the MADS-box domain. The stretch at 99–166 (AEINAQYYQQ…KKNELLFSEI (68 aa)) forms a coiled coil. Positions 103–193 (AQYYQQESAK…RAKIAENERN (91 aa)) constitute a K-box domain.

In terms of assembly, homodimer, capable of binding to CArG-box sequences. Forms a heterodimer via the K-box domain with either SEPALATTA1/AGL2, SEPALATTA2/AGL4, SEPALLATA3/AGL9 or AGL6. Heterodimerization also seen with some other Agamous-like MADS-box proteins. Interacts with AGL15 and AGL16. Component of a complex made of FLOR1, VSP1 and AGAMOUS (AG). Binds directly with FLR1. In terms of tissue distribution, detected early in the floral meristem but mostly expressed in stamen and carpel primordia.

It is found in the nucleus. Probable transcription factor involved in the control of organ identity during the early development of flowers. Is required for normal development of stamens and carpels in the wild-type flower. Plays a role in maintaining the determinacy of the floral meristem. Acts as C class cadastral protein by repressing the A class floral homeotic genes like APETALA1. Forms a heterodimer via the K-box domain with either SEPALATTA1/AGL2, SEPALATTA2/AGL4, SEPALLATA3/AGL9 or AGL6 that could be involved in genes regulation during floral meristem development. Controls AHL21/GIK, a multifunctional chromatin modifier in reproductive organ patterning and differentiation. Induces microsporogenesis through the activation of SPL/NZZ. The sequence is that of Floral homeotic protein AGAMOUS (AG) from Arabidopsis thaliana (Mouse-ear cress).